The primary structure comprises 1151 residues: Chromosome partition protein Smc (1151 aa).

32–39 provides a ligand contact to ATP; sequence PNGCGKSN. Coiled coils occupy residues 170-218, 342-379, 407-508, and 633-994; these read ISGL…AARY, IGRLEWEREALETAHEGHEERLAEAAEAAREAGAALGE, DSRT…REAQ, and LKQL…EGRE. 2 stretches are compositionally biased toward basic and acidic residues: residues 421 to 438 and 465 to 480; these read RARETVEAAAEAQERAAE and DEARAEAQSREAEARA. Disordered regions lie at residues 421–483, 806–826, and 862–889; these read RARE…AQRS, SAELAERKAETEEALREAAEA, and LRAAQEAEREAERQAGESREARARAEAR. The segment covering 866 to 889 has biased composition (basic and acidic residues); that stretch reads QEAEREAERQAGESREARARAEAR.

It belongs to the SMC family. Homodimer.

Its subcellular location is the cytoplasm. Functionally, required for chromosome condensation and partitioning. This is Chromosome partition protein Smc from Cereibacter sphaeroides (strain ATCC 17029 / ATH 2.4.9) (Rhodobacter sphaeroides).